The following is a 572-amino-acid chain: Sulfate adenylyltransferase (572 aa).

An N-terminal region spans residues 1–169; the sequence is MANAPHGGVL…IEAVNKLNHY (169 aa). Residues 170-393 form a catalytic region; the sequence is DYVALRYTPA…LRESNPPRAT (224 aa). Gln-197 is a sulfate binding site. ATP contacts are provided by residues 197–200 and 291–294; these read QTRN and GRDH. Active-site residues include Thr-198, Arg-199, and Asn-200. Arg-199 lines the sulfate pocket. Ala-295 lines the sulfate pocket. ATP is bound at residue Val-333. An allosteric regulation domain; adenylyl-sulfate kinase-like region spans residues 394 to 572; sequence QGFTIFLTGY…LESQGFLERQ (179 aa). Residues 433–436, Arg-450, 476–477, and Arg-514 each bind 3'-phosphoadenylyl sulfate; these read DTVR and IA.

The protein in the N-terminal section; belongs to the sulfate adenylyltransferase family. This sequence in the C-terminal section; belongs to the APS kinase family. Homohexamer. Dimer of trimers.

It is found in the cytoplasm. It carries out the reaction sulfate + ATP + H(+) = adenosine 5'-phosphosulfate + diphosphate. Its pathway is sulfur metabolism; hydrogen sulfide biosynthesis; sulfite from sulfate: step 1/3. Its activity is regulated as follows. Allosterically inhibited by 3'-phosphoadenosine 5'-phosphosulfate (PAPS). Functionally, catalyzes the first intracellular reaction of sulfate assimilation, forming adenosine-5'-phosphosulfate (APS) from inorganic sulfate and ATP. Plays an important role in sulfate activation as a component of the biosynthesis pathway of sulfur-containing amino acids. In Penicillium chrysogenum (Penicillium notatum), this protein is Sulfate adenylyltransferase.